A 55-amino-acid polypeptide reads, in one-letter code: ATP synthase F(0) complex subunit 8 (55 aa).

Residues 9-29 (WFFIMIMSWAVFLLLIQPKLL) traverse the membrane as a helical segment.

The protein belongs to the ATPase protein 8 family. Component of the ATP synthase complex composed at least of ATP5F1A/subunit alpha, ATP5F1B/subunit beta, ATP5MC1/subunit c (homooctomer), MT-ATP6/subunit a, MT-ATP8/subunit 8, ATP5ME/subunit e, ATP5MF/subunit f, ATP5MG/subunit g, ATP5MK/subunit k, ATP5MJ/subunit j, ATP5F1C/subunit gamma, ATP5F1D/subunit delta, ATP5F1E/subunit epsilon, ATP5PF/subunit F6, ATP5PB/subunit b, ATP5PD/subunit d, ATP5PO/subunit OSCP. ATP synthase complex consists of a soluble F(1) head domain (subunits alpha(3) and beta(3)) - the catalytic core - and a membrane F(0) domain - the membrane proton channel (subunits c, a, 8, e, f, g, k and j). These two domains are linked by a central stalk (subunits gamma, delta, and epsilon) rotating inside the F1 region and a stationary peripheral stalk (subunits F6, b, d, and OSCP).

It localises to the mitochondrion membrane. Subunit 8, of the mitochondrial membrane ATP synthase complex (F(1)F(0) ATP synthase or Complex V) that produces ATP from ADP in the presence of a proton gradient across the membrane which is generated by electron transport complexes of the respiratory chain. ATP synthase complex consist of a soluble F(1) head domain - the catalytic core - and a membrane F(1) domain - the membrane proton channel. These two domains are linked by a central stalk rotating inside the F(1) region and a stationary peripheral stalk. During catalysis, ATP synthesis in the catalytic domain of F(1) is coupled via a rotary mechanism of the central stalk subunits to proton translocation. In vivo, can only synthesize ATP although its ATP hydrolase activity can be activated artificially in vitro. Part of the complex F(0) domain. The sequence is that of ATP synthase F(0) complex subunit 8 from Rhea americana (Greater rhea).